We begin with the raw amino-acid sequence, 548 residues long: Probable malate:quinone oxidoreductase (548 aa).

The interval 520 to 548 is disordered; the sequence is YDRPQAADSTPKPQLKPQPVQKEVADIAL. A compositionally biased stretch (low complexity) spans 530 to 541; it reads PKPQLKPQPVQK.

It belongs to the MQO family. It depends on FAD as a cofactor.

The enzyme catalyses (S)-malate + a quinone = a quinol + oxaloacetate. It functions in the pathway carbohydrate metabolism; tricarboxylic acid cycle; oxaloacetate from (S)-malate (quinone route): step 1/1. This is Probable malate:quinone oxidoreductase from Shigella dysenteriae serotype 1 (strain Sd197).